A 482-amino-acid polypeptide reads, in one-letter code: GTPase Der (482 aa).

2 consecutive EngA-type G domains span residues 3–166 (PVVA…SEQF) and 195–368 (IKLA…NSAT). GTP-binding positions include 9 to 16 (GRPNVGKS), 56 to 60 (DTGGI), 118 to 121 (NKVD), 201 to 208 (GKPNVGKS), 248 to 252 (DTAGV), and 313 to 316 (NKWD). Positions 369–453 (KRINTSMLTR…PIKVEFREGA (85 aa)) constitute a KH-like domain.

The protein belongs to the TRAFAC class TrmE-Era-EngA-EngB-Septin-like GTPase superfamily. EngA (Der) GTPase family. Associates with the 50S ribosomal subunit.

Its function is as follows. GTPase that plays an essential role in the late steps of ribosome biogenesis. The sequence is that of GTPase Der from Pseudoalteromonas atlantica (strain T6c / ATCC BAA-1087).